A 264-amino-acid chain; its full sequence is Ribonuclease HII (264 aa).

Positions 33 to 224 (GPVAGVDEVG…VRRVASGSNT (192 aa)) constitute an RNase H type-2 domain. The a divalent metal cation site is built by aspartate 39, glutamate 40, and aspartate 133. The interval 222–264 (SNTAEVADGQPDPRDGTAQTGEGRWSKSSHPATMRATGRAQGT) is disordered.

Belongs to the RNase HII family. The cofactor is Mn(2+). Mg(2+) serves as cofactor.

It localises to the cytoplasm. It carries out the reaction Endonucleolytic cleavage to 5'-phosphomonoester.. Its function is as follows. Endonuclease that specifically degrades the RNA of RNA-DNA hybrids. The protein is Ribonuclease HII of Mycobacterium bovis (strain BCG / Pasteur 1173P2).